The primary structure comprises 345 residues: Phosphoribosylformylglycinamidine cyclo-ligase (345 aa).

It belongs to the AIR synthase family.

The protein localises to the cytoplasm. The enzyme catalyses 2-formamido-N(1)-(5-O-phospho-beta-D-ribosyl)acetamidine + ATP = 5-amino-1-(5-phospho-beta-D-ribosyl)imidazole + ADP + phosphate + H(+). It functions in the pathway purine metabolism; IMP biosynthesis via de novo pathway; 5-amino-1-(5-phospho-D-ribosyl)imidazole from N(2)-formyl-N(1)-(5-phospho-D-ribosyl)glycinamide: step 2/2. The chain is Phosphoribosylformylglycinamidine cyclo-ligase from Shigella dysenteriae serotype 1 (strain Sd197).